The following is a 308-amino-acid chain: Putative mitochondrial transporter UCP3 (308 aa).

Residues 1 to 10 (MVGLQPSEVP) lie on the Mitochondrial intermembrane side of the membrane. A helical transmembrane segment spans residues 11-32 (PTTVVKFLGAGTAACFADLLTF). Solcar repeat units lie at residues 11–102 (PTTV…VKQF), 111–202 (SSVA…IKEK), and 211–296 (DNFP…LKRA). Residues 33 to 73 (PLDTAKVRLQIQGENPGAQSVQYRGVLGTILTMVRTEGPRS) are Mitochondrial matrix-facing. Residues 74–96 (PYSGLVAGLHRQMSFASIRIGLY) traverse the membrane as a helical segment. Residues 97–116 (DSVKQFYTPKGADHSSVAIR) are Mitochondrial intermembrane-facing. Residues 117–133 (ILAGCTTGAMAVTCAQP) form a helical membrane-spanning segment. Residues 134–179 (TDVVKVRFQAMIRLGTGGERKYRGTMDAYRTIAREEGVRGLWKGTW) are Mitochondrial matrix-facing. A helical transmembrane segment spans residues 180–196 (PNITRNAIVNCAEMVTY). Residues 197-213 (DIIKEKLLESHLFTDNF) lie on the Mitochondrial intermembrane side of the membrane. The chain crosses the membrane as a helical span at residues 214 to 233 (PCHFVSAFGAGFCATVVASP). Residues 234–267 (VDVVKTRYMNAPLGRYRSPLHCMLKMVAQEGPTA) are Mitochondrial matrix-facing. The chain crosses the membrane as a helical span at residues 268–290 (FYKGFVPSFLRLGAWNVMMFVTY). The segment at 275–297 (SFLRLGAWNVMMFVTYEQLKRAL) is purine nucleotide binding. Residues 291-308 (EQLKRALMKVQVLRESPF) lie on the Mitochondrial intermembrane side of the membrane.

This sequence belongs to the mitochondrial carrier (TC 2.A.29) family. Interacts with HAX1; the interaction is direct and calcium-dependent.

The protein resides in the mitochondrion inner membrane. With respect to regulation, inhibited by purine nucleotides and inorganic phosphate (in vitro). In terms of biological role, putative transmembrane transporter that plays a role in mitochondrial metabolism via an as yet unclear mechanism. Originally, this mitochondrial protein was thought to act as a proton transmembrane transporter from the mitochondrial intermembrane space into the matrix, causing proton leaks through the inner mitochondrial membrane, thereby uncoupling mitochondrial membrane potential generation from ATP synthesis. However, this function is controversial and uncoupling may not be the function, or at least not the main function, but rather a consequence of more conventional metabolite transporter activity. In Mus musculus (Mouse), this protein is Putative mitochondrial transporter UCP3.